The chain runs to 180 residues: Large ribosomal subunit protein uL5 (180 aa).

The protein belongs to the universal ribosomal protein uL5 family. As to quaternary structure, part of the 50S ribosomal subunit; part of the 5S rRNA/L5/L18/L25 subcomplex. Contacts the 5S rRNA and the P site tRNA. Forms a bridge to the 30S subunit in the 70S ribosome.

Its function is as follows. This is one of the proteins that bind and probably mediate the attachment of the 5S RNA into the large ribosomal subunit, where it forms part of the central protuberance. In the 70S ribosome it contacts protein S13 of the 30S subunit (bridge B1b), connecting the 2 subunits; this bridge is implicated in subunit movement. Contacts the P site tRNA; the 5S rRNA and some of its associated proteins might help stabilize positioning of ribosome-bound tRNAs. The chain is Large ribosomal subunit protein uL5 from Chlamydia caviae (strain ATCC VR-813 / DSM 19441 / 03DC25 / GPIC) (Chlamydophila caviae).